A 732-amino-acid chain; its full sequence is Elongation factor 2 (732 aa).

Residues 19 to 230 (ERIRNMGIAA…VSFKDIIDLT (212 aa)) form the tr-type G domain. Residues 28–35 (AHIDHGKT), 94–98 (DTPGH), and 148–151 (NKVD) contribute to the GTP site. His-597 carries the post-translational modification Diphthamide.

It belongs to the TRAFAC class translation factor GTPase superfamily. Classic translation factor GTPase family. EF-G/EF-2 subfamily.

The protein resides in the cytoplasm. Functionally, catalyzes the GTP-dependent ribosomal translocation step during translation elongation. During this step, the ribosome changes from the pre-translocational (PRE) to the post-translocational (POST) state as the newly formed A-site-bound peptidyl-tRNA and P-site-bound deacylated tRNA move to the P and E sites, respectively. Catalyzes the coordinated movement of the two tRNA molecules, the mRNA and conformational changes in the ribosome. This chain is Elongation factor 2, found in Thermococcus sibiricus (strain DSM 12597 / MM 739).